Consider the following 85-residue polypeptide: Cytochrome c6 (85 aa).

Heme c contacts are provided by cysteine 14, cysteine 17, histidine 18, and methionine 58.

Belongs to the cytochrome c family. PetJ subfamily. Monomer. Post-translationally, binds 1 heme c group covalently per subunit.

It is found in the plastid. It localises to the chloroplast thylakoid lumen. Functionally, functions as an electron carrier between membrane-bound cytochrome b6-f and photosystem I in oxygenic photosynthesis. The polypeptide is Cytochrome c6 (petJ) (Petalonia fascia (False kelp)).